We begin with the raw amino-acid sequence, 166 residues long: Transcription elongation factor GreA (166 aa).

This sequence belongs to the GreA/GreB family.

In terms of biological role, necessary for efficient RNA polymerase transcription elongation past template-encoded arresting sites. The arresting sites in DNA have the property of trapping a certain fraction of elongating RNA polymerases that pass through, resulting in locked ternary complexes. Cleavage of the nascent transcript by cleavage factors such as GreA or GreB allows the resumption of elongation from the new 3'terminus. GreA releases sequences of 2 to 3 nucleotides. The chain is Transcription elongation factor GreA from Anaeromyxobacter sp. (strain K).